The following is an 828-amino-acid chain: Zinc finger protein 438 (828 aa).

3 disordered regions span residues 1-29 (MQNS…KGLQ), 143-173 (KSGC…LYKP), and 193-231 (ALTN…PAKQ). 2 stretches are compositionally biased toward polar residues: residues 16-29 (NIPS…KGLQ) and 150-159 (PAQTQMCPQM). C2H2-type zinc fingers lie at residues 507–529 (HRCH…MNTH), 535–557 (YSCR…MKLH), and 567–590 (MCCE…KEVH). The segment at 680-721 (EGTFPGSKGTQEELVQHASPDWKRHPERGKPEKVHSSSEESH) is disordered. Over residues 689-721 (TQEELVQHASPDWKRHPERGKPEKVHSSSEESH) the composition is skewed to basic and acidic residues. The C2H2-type 4 zinc-finger motif lies at 776–799 (FNCLLCAEMLGRKEDLLHHWKHQH).

Belongs to the krueppel C2H2-type zinc-finger protein family. In terms of tissue distribution, ubiquitous.

It is found in the nucleus. Isoform 1 acts as a transcriptional repressor. The protein is Zinc finger protein 438 (ZNF438) of Homo sapiens (Human).